The sequence spans 93 residues: UPF0147 protein MJ1419 (93 aa).

The protein belongs to the UPF0147 family.

The sequence is that of UPF0147 protein MJ1419 from Methanocaldococcus jannaschii (strain ATCC 43067 / DSM 2661 / JAL-1 / JCM 10045 / NBRC 100440) (Methanococcus jannaschii).